A 603-amino-acid polypeptide reads, in one-letter code: Elongation factor 4 (603 aa).

The region spanning 7 to 189 (SRIRNFCIIA…SIVHLVPPPS (183 aa)) is the tr-type G domain. Residues 19–24 (DHGKST) and 136–139 (NKID) each bind GTP.

The protein belongs to the TRAFAC class translation factor GTPase superfamily. Classic translation factor GTPase family. LepA subfamily.

The protein localises to the cell inner membrane. It catalyses the reaction GTP + H2O = GDP + phosphate + H(+). Required for accurate and efficient protein synthesis under certain stress conditions. May act as a fidelity factor of the translation reaction, by catalyzing a one-codon backward translocation of tRNAs on improperly translocated ribosomes. Back-translocation proceeds from a post-translocation (POST) complex to a pre-translocation (PRE) complex, thus giving elongation factor G a second chance to translocate the tRNAs correctly. Binds to ribosomes in a GTP-dependent manner. This chain is Elongation factor 4, found in Crocosphaera subtropica (strain ATCC 51142 / BH68) (Cyanothece sp. (strain ATCC 51142)).